The chain runs to 942 residues: Protein inturned (942 aa).

The disordered stretch occupies residues 1–52; sequence MASVASCDSRPSSDELPGDPSSQEEDEDYDFEDRVSDSGSYSSASSDYDDLE. The segment covering 22-31 has biased composition (acidic residues); that stretch reads SQEEDEDYDF. Residues 37–46 are compositionally biased toward low complexity; the sequence is DSGSYSSASS. Positions 185–263 constitute a PDZ domain; that stretch reads LVGIIHQTKW…PMQVKLTFEN (79 aa). A phosphoserine mark is found at Ser670 and Ser674. A disordered region spans residues 704–754; sequence TRKPSPSCSSGGSDNGCEGGEDDGFSPHTTPDAVRKQRESQGSDGLEESGT.

Belongs to the inturned family. As to quaternary structure, component of the CPLANE (ciliogenesis and planar polarity effectors) complex, composed of INTU, FUZ and WDPCP. Interacts with CPLANE1. Interacts with NPHP4 and DAAM1; INTU is mediating the interaction between NPHP4 and DAAM1.

The protein localises to the cytoplasm. It is found in the cell surface. The protein resides in the cytoskeleton. It localises to the cilium basal body. Its subcellular location is the microtubule organizing center. The protein localises to the centrosome. It is found in the centriole. Plays a key role in ciliogenesis and embryonic development. Regulator of cilia formation by controlling the organization of the apical actin cytoskeleton and the positioning of the basal bodies at the apical cell surface, which in turn is essential for the normal orientation of elongating ciliary microtubules. Plays a key role in definition of cell polarity via its role in ciliogenesis but not via conversion extension. Has an indirect effect on hedgehog signaling. Proposed to function as core component of the CPLANE (ciliogenesis and planar polarity effectors) complex involved in the recruitment of peripheral IFT-A proteins to basal bodies. Required for recruitment of CPLANE2 to the mother centriole. Binds phosphatidylinositol 3-phosphate with highest affinity, followed by phosphatidylinositol 4-phosphate and phosphatidylinositol 5-phosphate. The protein is Protein inturned (INTU) of Homo sapiens (Human).